Here is a 402-residue protein sequence, read N- to C-terminus: Palmitoyltransferase PFA4 (402 aa).

The Cytoplasmic segment spans residues methionine 1–proline 8. A helical membrane pass occupies residues isoleucine 9–phenylalanine 29. The Lumenal segment spans residues valine 30 to glutamate 39. Residues glutamine 40–valine 60 traverse the membrane as a helical segment. Over aspartate 61–arginine 125 the chain is Cytoplasmic. The DHHC domain occupies arginine 78 to phenylalanine 128. The S-palmitoyl cysteine intermediate role is filled by cysteine 108. Residues phenylalanine 126–leucine 146 form a helical membrane-spanning segment. The Lumenal portion of the chain corresponds to histidine 147–cysteine 165. The helical transmembrane segment at alanine 166–valine 186 threads the bilayer. Residues arginine 187–asparagine 402 lie on the Cytoplasmic side of the membrane.

Belongs to the DHHC palmitoyltransferase family. PFA4 subfamily.

It localises to the endoplasmic reticulum membrane. The catalysed reaction is L-cysteinyl-[protein] + hexadecanoyl-CoA = S-hexadecanoyl-L-cysteinyl-[protein] + CoA. Its function is as follows. Mediates the reversible addition of palmitate to target proteins, thereby regulating their membrane association and biological function. The protein is Palmitoyltransferase PFA4 of Debaryomyces hansenii (strain ATCC 36239 / CBS 767 / BCRC 21394 / JCM 1990 / NBRC 0083 / IGC 2968) (Yeast).